A 446-amino-acid polypeptide reads, in one-letter code: Elongation factor Ts, mitochondrial (446 aa).

The transit peptide at 1 to 33 directs the protein to the mitochondrion; it reads MSGSRSALSVVRLAACAKPCTLGSTSSVLTRPF.

This sequence belongs to the EF-Ts family.

The protein resides in the mitochondrion. Functionally, associates with the EF-Tu.GDP complex and induces the exchange of GDP to GTP. It remains bound to the aminoacyl-tRNA.EF-Tu.GTP complex up to the GTP hydrolysis stage on the ribosome. The protein is Elongation factor Ts, mitochondrial of Mycosarcoma maydis (Corn smut fungus).